A 495-amino-acid polypeptide reads, in one-letter code: Probable cytochrome P450 4s3 (495 aa).

Glutamate 307 and cysteine 436 together coordinate heme.

This sequence belongs to the cytochrome P450 family. It depends on heme as a cofactor.

Its subcellular location is the endoplasmic reticulum membrane. The protein resides in the microsome membrane. Functionally, may be involved in the metabolism of insect hormones and in the breakdown of synthetic insecticides. This Drosophila melanogaster (Fruit fly) protein is Probable cytochrome P450 4s3 (Cyp4s3).